Here is a 156-residue protein sequence, read N- to C-terminus: Small ribosomal subunit protein bS6 (156 aa).

Residues 95–156 (AITETSPLAK…DRDEQSEDSE (62 aa)) form a disordered region. Residues 117 to 126 (RSGRDRDESG) are compositionally biased toward basic and acidic residues.

The protein belongs to the bacterial ribosomal protein bS6 family.

Binds together with bS18 to 16S ribosomal RNA. The sequence is that of Small ribosomal subunit protein bS6 from Nitrosococcus oceani (strain ATCC 19707 / BCRC 17464 / JCM 30415 / NCIMB 11848 / C-107).